Reading from the N-terminus, the 704-residue chain is UvrABC system protein C (704 aa).

A disordered region spans residues 1–77 (MIHDPAEPPA…PAQAGAGPMA (77 aa)). Residues 49 to 66 (VEEDDEARLPEVEDEPEA) are compositionally biased toward acidic residues. The span at 67–77 (EPAQAGAGPMA) shows a compositional bias: low complexity. The region spanning 92–170 (TSPGVYRMLN…IKQLRPRFNV (79 aa)) is the GIY-YIG domain. The UVR domain maps to 280–315 (RAVKELLAAEMEKASGELEFETAALYRDRLAALSAI).

This sequence belongs to the UvrC family. As to quaternary structure, interacts with UvrB in an incision complex.

The protein resides in the cytoplasm. Functionally, the UvrABC repair system catalyzes the recognition and processing of DNA lesions. UvrC both incises the 5' and 3' sides of the lesion. The N-terminal half is responsible for the 3' incision and the C-terminal half is responsible for the 5' incision. The protein is UvrABC system protein C of Rhodopseudomonas palustris (strain ATCC BAA-98 / CGA009).